Here is a 571-residue protein sequence, read N- to C-terminus: Apolipoprotein N-acyltransferase (571 aa).

Helical transmembrane passes span 13–33 (VVLWLSGPPFAIGPLVFIALV), 51–68 (LYAASLAYWLLSLQGLRY), 72–92 (LMFLPWIALSGYLAIYPVLFI), 118–138 (LVAAVVWVGLEWIRNYFFTGI), 152–172 (MLIQIADLGGTYAVSFVIVCV), and 199–219 (LVTAGGLLIATMVYGAMSMNA). A CN hydrolase domain is found at 234–527 (NELTVYEQDI…SDVIYAQPRR (294 aa)). Glu275 (proton acceptor) is an active-site residue. The active site involves Lys380. Residue Cys430 is the Nucleophile of the active site. A helical membrane pass occupies residues 542-562 (AGLMGAATLCGLAWMTFEWLM).

Belongs to the CN hydrolase family. Apolipoprotein N-acyltransferase subfamily.

It is found in the cell inner membrane. It catalyses the reaction N-terminal S-1,2-diacyl-sn-glyceryl-L-cysteinyl-[lipoprotein] + a glycerophospholipid = N-acyl-S-1,2-diacyl-sn-glyceryl-L-cysteinyl-[lipoprotein] + a 2-acyl-sn-glycero-3-phospholipid + H(+). It participates in protein modification; lipoprotein biosynthesis (N-acyl transfer). In terms of biological role, catalyzes the phospholipid dependent N-acylation of the N-terminal cysteine of apolipoprotein, the last step in lipoprotein maturation. The sequence is that of Apolipoprotein N-acyltransferase from Rhodopirellula baltica (strain DSM 10527 / NCIMB 13988 / SH1).